A 292-amino-acid polypeptide reads, in one-letter code: 4-hydroxybenzoate solanesyltransferase (292 aa).

9 consecutive transmembrane segments (helical) span residues 28 to 48, 49 to 69, 97 to 117, 118 to 138, 140 to 160, 172 to 192, 217 to 237, 239 to 259, and 272 to 292; these read LILM…LPPL, PLLG…CVVN, VGIG…FYLT, PLSF…PGAK, VFPV…LISW, WVLW…YAMA, VGIF…ILML, PLYW…YIQL, and IFGQ…LGWL.

Belongs to the UbiA prenyltransferase family. Mg(2+) is required as a cofactor.

The protein localises to the cell inner membrane. It carries out the reaction all-trans-nonaprenyl diphosphate + 4-hydroxybenzoate = 4-hydroxy-3-(all-trans-nonaprenyl)benzoate + diphosphate. Its function is as follows. Catalyzes the prenylation of para-hydroxybenzoate (PHB) with an all-trans polyprenyl group. Mediates the second step in the final reaction sequence of plastoquinone-9 (PQ-9) biosynthesis, which is the condensation of the polyisoprenoid side chain with PHB, generating the first membrane-bound Q intermediate 4-hydroxy-3-solanesylbenzoate. This chain is 4-hydroxybenzoate solanesyltransferase, found in Synechocystis sp. (strain ATCC 27184 / PCC 6803 / Kazusa).